A 54-amino-acid chain; its full sequence is UPF0181 protein APJL_0874 (54 aa).

The protein belongs to the UPF0181 family.

The sequence is that of UPF0181 protein APJL_0874 from Actinobacillus pleuropneumoniae serotype 3 (strain JL03).